The following is a 288-amino-acid chain: MSQFSFTKMHGLGNSYIYVNMFEEQIREEDLAIVAEKVSNINTGIGADGMILICPSDVAPVKMRMFNNDGSEGKSCGNGLRCVAKYAYEHKLVEGKVFTIETLAGIVTAEVTVEDDKVTLAKIDMGAPRLTREEIPMLGEGETPFIRENFLYNNHRYAFTAVSMGNPHAVIFVDDVENAPLTTLGPVLETHEMFPERVNVEFIEILNDEEMNFRVWERGSGVTQACGTGACAAVVAAILNGKMEHGKEITVHLAGGDLMIAWTEEGNVLMKGPAEIICRGVYEYKIEA.

Residues Asn14 and Asn67 each contribute to the substrate site. Cys76 functions as the Proton donor in the catalytic mechanism. Substrate is bound by residues 77-78 (GN), Asn166, Asn199, and 217-218 (ER). Catalysis depends on Cys226, which acts as the Proton acceptor. Position 227 to 228 (227 to 228 (GT)) interacts with substrate.

The protein belongs to the diaminopimelate epimerase family. In terms of assembly, homodimer.

It is found in the cytoplasm. It carries out the reaction (2S,6S)-2,6-diaminopimelate = meso-2,6-diaminopimelate. It functions in the pathway amino-acid biosynthesis; L-lysine biosynthesis via DAP pathway; DL-2,6-diaminopimelate from LL-2,6-diaminopimelate: step 1/1. Functionally, catalyzes the stereoinversion of LL-2,6-diaminopimelate (L,L-DAP) to meso-diaminopimelate (meso-DAP), a precursor of L-lysine and an essential component of the bacterial peptidoglycan. The polypeptide is Diaminopimelate epimerase (Bacillus mycoides (strain KBAB4) (Bacillus weihenstephanensis)).